We begin with the raw amino-acid sequence, 148 residues long: Large ribosomal subunit protein bL9 (148 aa).

This sequence belongs to the bacterial ribosomal protein bL9 family.

In terms of biological role, binds to the 23S rRNA. This Coprothermobacter proteolyticus (strain ATCC 35245 / DSM 5265 / OCM 4 / BT) protein is Large ribosomal subunit protein bL9.